Here is a 64-residue protein sequence, read N- to C-terminus: Short neurotoxin 1 (64 aa).

Intrachain disulfides connect C3/C26, C20/C43, C45/C56, and C57/C62.

The protein belongs to the three-finger toxin family. Short-chain subfamily. Type I alpha-neurotoxin sub-subfamily. Expressed by the venom gland.

Its subcellular location is the secreted. Binds to muscle nicotinic acetylcholine receptor (nAChR) and inhibit acetylcholine from binding to the receptor, thereby impairing neuromuscular transmission. The protein is Short neurotoxin 1 of Bungarus fasciatus (Banded krait).